The primary structure comprises 342 residues: Delta(6)-protoilludene synthase 8 (342 aa).

Aspartate 81 provides a ligand contact to Mg(2+). The DDXXD motif signature appears at arginine 93–aspartate 97. Mg(2+) contacts are provided by asparagine 217, serine 221, and glutamate 225. An NSE/DTE motif motif is present at residues asparagine 217–glutamate 225. (2E,6E)-farnesyl diphosphate is bound by residues arginine 305 and tyrosine 306.

This sequence belongs to the terpene synthase family. Mg(2+) serves as cofactor.

The catalysed reaction is (2E,6E)-farnesyl diphosphate = Delta(6)-protoilludene + diphosphate. Its function is as follows. Terpene cyclase that catalyzes the cyclization of farnesyl diphosphate (FPP) to delta(6)-protoilludene. The sequence is that of Delta(6)-protoilludene synthase 8 from Postia placenta (strain ATCC 44394 / Madison 698-R) (Brown rot fungus).